Here is a 229-residue protein sequence, read N- to C-terminus: C-&gt;U-editing enzyme APOBEC-1 (229 aa).

Residues 10-134 form the CMP/dCMP-type deaminase domain; that stretch reads VDPTLRRRIE…QRNRQGLRDL (125 aa). Residue H61 coordinates Zn(2+). Catalysis depends on E63, which acts as the Proton donor. Zn(2+) is bound by residues C93 and C96.

This sequence belongs to the cytidine and deoxycytidylate deaminase family. In terms of assembly, homodimer. Interacts with A1CF; form an mRNA editing complex. Interacts with RBM47; form an mRNA editing complex. Found in a complex with CELF2/CUGBP2 and A1CF. Interacts with HNRPAB. Interacts with SYNCRIP. Zn(2+) serves as cofactor.

It is found in the cytoplasm. It localises to the nucleus. It carries out the reaction a cytidine in mRNA + H2O + H(+) = a uridine in mRNA + NH4(+). The catalysed reaction is cytidine(6666) in apoB mRNA + H2O + H(+) = uridine(6666) in apoB mRNA + NH4(+). Functionally, cytidine deaminase catalyzing the cytidine to uridine postranscriptional editing of a variety of mRNAs. Form complexes with cofactors that confer differential editing activity and selectivity. Responsible for the postranscriptional editing of a CAA codon for Gln to a UAA codon for stop in the apolipoprotein B mRNA. Also involved in CGA (Arg) to UGA (Stop) editing in the NF1 mRNA. May also play a role in the epigenetic regulation of gene expression by participating in DNA demethylation. In Mesocricetus auratus (Golden hamster), this protein is C-&gt;U-editing enzyme APOBEC-1.